Reading from the N-terminus, the 326-residue chain is Flotillin-like protein FloA (326 aa).

Transmembrane regions (helical) follow at residues 6-26 and 27-47; these read IILFFLVVAVIVLFYFVGSSV and SLWIQALVSGARVGLLNIVFM.

This sequence belongs to the flotillin-like FloA family. Homooligomerizes.

It localises to the cell membrane. The protein resides in the membrane raft. Its function is as follows. Found in functional membrane microdomains (FMM) that may be equivalent to eukaryotic membrane rafts. FMMs are highly dynamic and increase in number as cells age. Flotillins are thought to be important factors in membrane fluidity. The protein is Flotillin-like protein FloA of Desulfosudis oleivorans (strain DSM 6200 / JCM 39069 / Hxd3) (Desulfococcus oleovorans).